We begin with the raw amino-acid sequence, 306 residues long: Agmatinase (306 aa).

6 residues coordinate Mn(2+): histidine 126, aspartate 149, histidine 151, aspartate 153, aspartate 230, and aspartate 232.

The protein belongs to the arginase family. Agmatinase subfamily. Mn(2+) is required as a cofactor.

It carries out the reaction agmatine + H2O = urea + putrescine. It participates in amine and polyamine biosynthesis; putrescine biosynthesis via agmatine pathway; putrescine from agmatine: step 1/1. Its function is as follows. Catalyzes the formation of putrescine from agmatine. This chain is Agmatinase, found in Enterobacter sp. (strain 638).